The primary structure comprises 166 residues: Interferon gamma (166 aa).

The first 23 residues, 1–23 (MKYTSYFLALLLCGLLGFSGSYG), serve as a signal peptide directing secretion. Q24 is subject to Pyrrolidone carboxylic acid. Residues N39 and N106 are each glycosylated (N-linked (GlcNAc...) asparagine).

It belongs to the type II (or gamma) interferon family. Homodimer. Interacts with IFNGR1 (via extracellular domain); this interaction promotes IFNGR1 dimerization. As to expression, released primarily from activated T lymphocytes.

It localises to the secreted. Functionally, type II interferon produced by immune cells such as T-cells and NK cells that plays crucial roles in antimicrobial, antiviral, and antitumor responses by activating effector immune cells and enhancing antigen presentation. Primarily signals through the JAK-STAT pathway after interaction with its receptor IFNGR1 to affect gene regulation. Upon IFNG binding, IFNGR1 intracellular domain opens out to allow association of downstream signaling components JAK2, JAK1 and STAT1, leading to STAT1 activation, nuclear translocation and transcription of IFNG-regulated genes. Many of the induced genes are transcription factors such as IRF1 that are able to further drive regulation of a next wave of transcription. Plays a role in class I antigen presentation pathway by inducing a replacement of catalytic proteasome subunits with immunoproteasome subunits. In turn, increases the quantity, quality, and repertoire of peptides for class I MHC loading. Increases the efficiency of peptide generation also by inducing the expression of activator PA28 that associates with the proteasome and alters its proteolytic cleavage preference. Up-regulates as well MHC II complexes on the cell surface by promoting expression of several key molecules such as cathepsins B/CTSB, H/CTSH, and L/CTSL. Participates in the regulation of hematopoietic stem cells during development and under homeostatic conditions by affecting their development, quiescence, and differentiation. The polypeptide is Interferon gamma (IFNG) (Bos taurus (Bovine)).